We begin with the raw amino-acid sequence, 668 residues long: DNA ligase (668 aa).

Residues 37–41 (DAVYD), 86–87 (SM), and glutamate 116 contribute to the NAD(+) site. Lysine 118 functions as the N6-AMP-lysine intermediate in the catalytic mechanism. The NAD(+) site is built by arginine 139, glutamate 173, lysine 288, and lysine 312. Zn(2+)-binding residues include cysteine 406, cysteine 409, cysteine 424, and cysteine 429. Residues 590 to 668 (APDNFFKEKT…EQEAIAKIEK (79 aa)) enclose the BRCT domain.

The protein belongs to the NAD-dependent DNA ligase family. LigA subfamily. Mg(2+) is required as a cofactor. The cofactor is Mn(2+).

The enzyme catalyses NAD(+) + (deoxyribonucleotide)n-3'-hydroxyl + 5'-phospho-(deoxyribonucleotide)m = (deoxyribonucleotide)n+m + AMP + beta-nicotinamide D-nucleotide.. DNA ligase that catalyzes the formation of phosphodiester linkages between 5'-phosphoryl and 3'-hydroxyl groups in double-stranded DNA using NAD as a coenzyme and as the energy source for the reaction. It is essential for DNA replication and repair of damaged DNA. This is DNA ligase from Lactobacillus gasseri (strain ATCC 33323 / DSM 20243 / BCRC 14619 / CIP 102991 / JCM 1131 / KCTC 3163 / NCIMB 11718 / NCTC 13722 / AM63).